The sequence spans 402 residues: 3-isopropylmalate dehydratase large subunit 2 (402 aa).

Residues cysteine 280, cysteine 341, and cysteine 344 each contribute to the [4Fe-4S] cluster site.

Belongs to the aconitase/IPM isomerase family. LeuC type 2 subfamily. As to quaternary structure, heterodimer of LeuC and LeuD. [4Fe-4S] cluster serves as cofactor.

The enzyme catalyses (2R,3S)-3-isopropylmalate = (2S)-2-isopropylmalate. The protein operates within amino-acid biosynthesis; L-leucine biosynthesis; L-leucine from 3-methyl-2-oxobutanoate: step 2/4. Its function is as follows. Catalyzes the isomerization between 2-isopropylmalate and 3-isopropylmalate, via the formation of 2-isopropylmaleate. The polypeptide is 3-isopropylmalate dehydratase large subunit 2 (Methanopyrus kandleri (strain AV19 / DSM 6324 / JCM 9639 / NBRC 100938)).